The primary structure comprises 1085 residues: SLIT-ROBO Rho GTPase-activating protein 1 (1085 aa).

One can recognise an F-BAR domain in the interval 19–314 (SQVKEIRAQL…AVDNLEPRSD (296 aa)). Residues 351 to 390 (VQAELMLRYQQLQSRLATLKIENEEVKKTTEATLQTIQDM) adopt a coiled-coil conformation. A Phosphoserine modification is found at Ser-416. A disordered region spans residues 475–496 (YMTTRPPNVPPKPQKHRKSRPR). The region spanning 506–694 (GDLETFVKDS…TIIIHHETIF (189 aa)) is the Rho-GAP domain. One can recognise an SH3 domain in the interval 743–802 (CEPIEAIAKFDYVGRSARELSFKKGASLLLYHRASEDWWEGRHNGIDGLVPHQYIVVQDM). Residues 808 to 822 (DTLSQKADSEASSGP) show a composition bias toward polar residues. A disordered region spans residues 808-954 (DTLSQKADSE…TGFNDHKPLD (147 aa)). 2 positions are modified to phosphoserine: Ser-835 and Ser-917. Over residues 922 to 931 (SRHDSLKKID) the composition is skewed to basic and acidic residues. A Phosphoserine modification is found at Ser-932. A compositionally biased stretch (polar residues) spans 937–946 (RSTSSGQYTG). Residues 956–985 (ETIAQDIEETMNTALNELRELERQSTAKHA) adopt a coiled-coil conformation. Residues 997-1011 (KNSPTPATSTESLSP) show a composition bias toward polar residues. Disordered regions lie at residues 997 to 1038 (KNSP…MSTF) and 1051 to 1085 (KPPALRPKPAVLPKTNPTIGPAPPPQGPTDKSCTM). At Ser-999 the chain carries Phosphoserine. Thr-1001 carries the phosphothreonine modification. Low complexity predominate over residues 1027–1037 (STSSSSDTMST). Ser-1032 is subject to Phosphoserine.

As to quaternary structure, homodimer. Forms a heterooligomer with SRGAP2 and SRGAP3 through its F-BAR domain. Interacts with ROBO1, CDC42 and RHOA. Interacts with FASLG. Expressed in brain, lung, kidney, and testis.

In terms of biological role, GTPase-activating protein for RhoA and Cdc42 small GTPases. Together with CDC42 seems to be involved in the pathway mediating the repulsive signaling of Robo and Slit proteins in neuronal migration. SLIT2, probably through interaction with ROBO1, increases the interaction of SRGAP1 with ROBO1 and inactivates CDC42. This is SLIT-ROBO Rho GTPase-activating protein 1 (SRGAP1) from Homo sapiens (Human).